We begin with the raw amino-acid sequence, 211 residues long: Probable GTP-binding protein EngB (211 aa).

Positions 21–197 constitute an EngB-type G domain; that stretch reads TAPEFAFLGR…WGEIHRVAAE (177 aa). Residues 29–36, 55–59, 80–83, 147–150, and 176–178 each bind GTP; these read GRSNVGKS, GRTRA, DLPG, TKAD, and CSA. Residues S36 and T57 each contribute to the Mg(2+) site.

This sequence belongs to the TRAFAC class TrmE-Era-EngA-EngB-Septin-like GTPase superfamily. EngB GTPase family. Mg(2+) serves as cofactor.

In terms of biological role, necessary for normal cell division and for the maintenance of normal septation. This Acidobacterium capsulatum (strain ATCC 51196 / DSM 11244 / BCRC 80197 / JCM 7670 / NBRC 15755 / NCIMB 13165 / 161) protein is Probable GTP-binding protein EngB.